A 392-amino-acid chain; its full sequence is MDLFGDLPEPERPPRPSAGKEAQEGPVLFEDLPPTSSTDSGSGGPLLFDGLPPAGSGNSGSLATSGSQVVKNEGKGAKRKAPEEEKNGGEELVEKKVCKASSVIFGLKGYVAERKGEREEMQDAHVILNDITQECNPPSSLITRVSYFAVFDGHGGIRASKFAAQNLHQNLIRKFPKGDVISVEKTVKRCLLDTFKHTDEEFLKQASSQKPAWKDGSTATCVLAVDNILYIANLGDSRAILCRYNEESQKHAALSLSKEHNPTQYEERMRIQKAGGNVRDGRVLGVLEVSRSIGDGQYKRCGVTSVPDIRRCQLTPNDRFILLACDGLFKVFTPEEAVNFILSCLEDEKIQTREGKPAVDARYEAACNRLANKAVQRGSADNVTVMVVRIGH.

The residue at position 1 (Met-1) is an N-acetylmethionine. Positions 1 to 91 are disordered; sequence MDLFGDLPEP…PEEEKNGGEE (91 aa). Residues 31 to 40 show a composition bias toward low complexity; it reads DLPPTSSTDS. The span at 59–70 shows a compositional bias: polar residues; the sequence is SGSLATSGSQVV. Residues 72-91 are compositionally biased toward basic and acidic residues; that stretch reads NEGKGAKRKAPEEEKNGGEE. One can recognise a PPM-type phosphatase domain in the interval 108 to 390; the sequence is KGYVAERKGE…DNVTVMVVRI (283 aa). Mn(2+)-binding residues include Asp-152 and Gly-153. Lys-210 is modified (N6-acetyllysine). 2 residues coordinate Mn(2+): Asp-326 and Asp-381.

This sequence belongs to the PP2C family. As to quaternary structure, interacts with ILK. Requires Mg(2+) as cofactor. The cofactor is Mn(2+). Widely expressed. Highest expression observed in kidney, liver and muscle.

It localises to the cytoplasm. The catalysed reaction is O-phospho-L-seryl-[protein] + H2O = L-seryl-[protein] + phosphate. It carries out the reaction O-phospho-L-threonyl-[protein] + H2O = L-threonyl-[protein] + phosphate. Functionally, protein phosphatase that may play a role in regulation of cell cycle progression via dephosphorylation of its substrates whose appropriate phosphorylation states might be crucial for cell proliferation. Selectively associates with integrin linked kinase (ILK), to modulate cell adhesion and growth factor signaling. Inhibits the ILK-GSK3B signaling axis and may play an important role in inhibiting oncogenic transformation. In Rattus norvegicus (Rat), this protein is Integrin-linked kinase-associated serine/threonine phosphatase 2C (Ilkap).